We begin with the raw amino-acid sequence, 155 residues long: 6,7-dimethyl-8-ribityllumazine synthase (155 aa).

5-amino-6-(D-ribitylamino)uracil-binding positions include Phe-22, 56-58 (AFE), and 80-82 (AVI). Residue 85 to 86 (NT) coordinates (2S)-2-hydroxy-3-oxobutyl phosphate. The Proton donor role is filled by His-88. Position 113 (Phe-113) interacts with 5-amino-6-(D-ribitylamino)uracil. Residue Arg-127 coordinates (2S)-2-hydroxy-3-oxobutyl phosphate.

Belongs to the DMRL synthase family.

The catalysed reaction is (2S)-2-hydroxy-3-oxobutyl phosphate + 5-amino-6-(D-ribitylamino)uracil = 6,7-dimethyl-8-(1-D-ribityl)lumazine + phosphate + 2 H2O + H(+). The protein operates within cofactor biosynthesis; riboflavin biosynthesis; riboflavin from 2-hydroxy-3-oxobutyl phosphate and 5-amino-6-(D-ribitylamino)uracil: step 1/2. In terms of biological role, catalyzes the formation of 6,7-dimethyl-8-ribityllumazine by condensation of 5-amino-6-(D-ribitylamino)uracil with 3,4-dihydroxy-2-butanone 4-phosphate. This is the penultimate step in the biosynthesis of riboflavin. This is 6,7-dimethyl-8-ribityllumazine synthase from Streptococcus pneumoniae serotype 2 (strain D39 / NCTC 7466).